Here is a 247-residue protein sequence, read N- to C-terminus: Neurotrophic factor BDNF precursor form (247 aa).

The first 18 residues, M1–A18, serve as a signal peptide directing secretion. A propeptide spanning residues A19–R128 is cleaved from the precursor. N-linked (GlcNAc...) asparagine glycosylation is present at N121. 3 disulfide bridges follow: C141/C208, C186/C237, and C196/C239.

It belongs to the NGF-beta family. Monomers and homodimers. Binds to NTRK2/TRKB. Can form heterodimers with other neurotrophin family members, such as NTF3 and NTF4 (in vitro), but the physiological relevance of this is not clear. BDNF precursor form: interacts with the heterodimer formed by NGFR and SORCS2. Mature BDNF has much lower affinity for the heterodimer formed by NGFR and SORCS2. N-glycosylated and glycosulfated, contrary to mature BDNF. In terms of processing, mature BDNF is produced by proteolytic removal of the propeptide, catalyzed by a FURIN family member. In addition, the precursor form is proteolytically cleaved within the propeptide, but this is not an obligatory intermediate for the production of mature BDNF. Can be converted into mature BDNF by plasmin (PLG).

It localises to the secreted. In terms of biological role, important signaling molecule that activates signaling cascades downstream of NTRK2. During development, promotes the survival and differentiation of selected neuronal populations of the peripheral and central nervous systems. Participates in axonal growth, pathfinding and in the modulation of dendritic growth and morphology. Major regulator of synaptic transmission and plasticity at adult synapses in many regions of the CNS. The versatility of BDNF is emphasized by its contribution to a range of adaptive neuronal responses including long-term potentiation (LTP), long-term depression (LTD), certain forms of short-term synaptic plasticity, as well as homeostatic regulation of intrinsic neuronal excitability. The sequence is that of Neurotrophic factor BDNF precursor form (BDNF) from Canis lupus familiaris (Dog).